A 293-amino-acid chain; its full sequence is AA9 family lytic polysaccharide monooxygenase E (293 aa).

An N-terminal signal peptide occupies residues 1–19; it reads MKGLLSVAALSLAVSEVSA. Residues histidine 20 and histidine 90 each coordinate Cu(2+). Cysteines 59 and 172 form a disulfide. O2-binding residues include histidine 158 and glutamine 167. A Cu(2+)-binding site is contributed by tyrosine 169. In terms of domain architecture, CBM1 spans 257–293; it reads CAVAKWGQCGGNGWTGCTTCAAGSTCNTQNAYYHQCV.

It belongs to the polysaccharide monooxygenase AA9 family. Cu(2+) serves as cofactor.

It localises to the secreted. The enzyme catalyses [(1-&gt;4)-beta-D-glucosyl]n+m + reduced acceptor + O2 = 4-dehydro-beta-D-glucosyl-[(1-&gt;4)-beta-D-glucosyl]n-1 + [(1-&gt;4)-beta-D-glucosyl]m + acceptor + H2O.. Glucose dehydrogenase and aryl-alcohol quinone oxidoreductases regulate the oxidative degradation of cellulose since they can act as catalytically efficient electron donors for LPMO9E. Lytic polysaccharide monooxygenase (LPMO) that depolymerizes crystalline and amorphous polysaccharides via the oxidation of scissile alpha- or beta-(1-4)-glycosidic bonds, yielding only C1 oxidation products. Catalysis by LPMOs requires the reduction of the active-site copper from Cu(II) to Cu(I) by a reducing agent and H(2)O(2) or O(2) as a cosubstrate. Improves the progression of lytic enzymes in delignified miscanthus cell walls. This boosting effect dependents on the cellular type which indicates contrasted recalcitrance levels in plant tissues. The chain is AA9 family lytic polysaccharide monooxygenase E from Podospora anserina (strain S / ATCC MYA-4624 / DSM 980 / FGSC 10383) (Pleurage anserina).